Reading from the N-terminus, the 195-residue chain is HTH-type transcriptional regulator BetI (195 aa).

One can recognise an HTH tetR-type domain in the interval 8-68 (SIRRRQLIDA…ATMRDITSQL (61 aa)). The segment at residues 31–50 (TIAQIARRAGVSTGIISHYF) is a DNA-binding region (H-T-H motif).

It participates in amine and polyamine biosynthesis; betaine biosynthesis via choline pathway [regulation]. Repressor involved in the biosynthesis of the osmoprotectant glycine betaine. It represses transcription of the choline transporter BetT and the genes of BetAB involved in the synthesis of glycine betaine. This is HTH-type transcriptional regulator BetI from Shigella flexneri serotype 5b (strain 8401).